The primary structure comprises 304 residues: Cyclin-dependent kinase 3 (304 aa).

The Protein kinase domain occupies 4-286 (FQKVEKIGEG…AKTALAHPYF (283 aa)). ATP contacts are provided by residues 10 to 18 (IGEGTYGVV) and Lys-33. Asp-127 acts as the Proton acceptor in catalysis.

It belongs to the protein kinase superfamily. CMGC Ser/Thr protein kinase family. CDC2/CDKX subfamily. In terms of assembly, interacts with CABLES1 and ATF1. Binding to CCNC/cyclin-C promotes RB1 phosphorylation. Binds to CABLES2.

The enzyme catalyses L-seryl-[protein] + ATP = O-phospho-L-seryl-[protein] + ADP + H(+). It catalyses the reaction L-threonyl-[protein] + ATP = O-phospho-L-threonyl-[protein] + ADP + H(+). Serine/threonine-protein kinase that plays a critical role in the control of the eukaryotic cell cycle; involved in G0-G1 and G1-S cell cycle transitions. Interacts with CCNC/cyclin-C during interphase. Phosphorylates histone H1, ATF1, RB1 and CABLES1. ATF1 phosphorylation triggers ATF1 transactivation and transcriptional activities, and promotes cell proliferation and transformation. CDK3/cyclin-C mediated RB1 phosphorylation is required for G0-G1 transition. Promotes G1-S transition probably by contributing to the activation of E2F1, E2F2 and E2F3 in a RB1-independent manner. The polypeptide is Cyclin-dependent kinase 3 (Cdk3) (Mus musculus (Mouse)).